The chain runs to 137 residues: Ribonuclease VapC51 (137 aa).

The region spanning 5–120 is the PINc domain; the sequence is YLLDTSVIKR…HYDADFDLIA (116 aa). Mg(2+)-binding residues include aspartate 8 and aspartate 95.

It belongs to the PINc/VapC protein family. Requires Mg(2+) as cofactor.

In terms of biological role, toxic component of a type II toxin-antitoxin (TA) system. An RNase. Its cognate antitoxin is VapB51. In Mycobacterium tuberculosis (strain ATCC 25618 / H37Rv), this protein is Ribonuclease VapC51.